A 503-amino-acid polypeptide reads, in one-letter code: ATP synthase subunit alpha (503 aa).

169–176 contacts ATP; sequence GDRKTGKT.

Belongs to the ATPase alpha/beta chains family. As to quaternary structure, F-type ATPases have 2 components, CF(1) - the catalytic core - and CF(0) - the membrane proton channel. CF(1) has five subunits: alpha(3), beta(3), gamma(1), delta(1), epsilon(1). CF(0) has three main subunits: a(1), b(2) and c(9-12). The alpha and beta chains form an alternating ring which encloses part of the gamma chain. CF(1) is attached to CF(0) by a central stalk formed by the gamma and epsilon chains, while a peripheral stalk is formed by the delta and b chains.

The protein resides in the cell membrane. It carries out the reaction ATP + H2O + 4 H(+)(in) = ADP + phosphate + 5 H(+)(out). Its activity is regulated as follows. Increases 2-fold following exposure to low pH. Functionally, produces ATP from ADP in the presence of a proton gradient across the membrane. The alpha chain is a regulatory subunit. This chain is ATP synthase subunit alpha, found in Lactobacillus acidophilus (strain ATCC 700396 / NCK56 / N2 / NCFM).